The primary structure comprises 230 residues: V-type proton ATPase subunit E1 (230 aa).

Position 1 is an N-acetylmethionine (M1). Residues 8-67 are a coiled coil; the sequence is RQIQQMVRFIRQEAEEKANEISVSAEEEFNIEKLQLVEAEKKKIRQDYEKKEKQADVRKK. The residue at position 178 (S178) is a Phosphoserine.

It belongs to the V-ATPase E subunit family. V-ATPase is a heteromultimeric enzyme composed of a peripheral catalytic V1 complex (components A to H) attached to an integral membrane V0 proton pore complex (components: a, c, c'', d and e).

It localises to the vacuole membrane. Its function is as follows. Subunit of the peripheral V1 complex of vacuolar ATPase essential for assembly or catalytic function. V-ATPase is responsible for acidifying a variety of intracellular compartments in eukaryotic cells. Required for Golgi organization and vacuole function in embryogenesis. This Arabidopsis thaliana (Mouse-ear cress) protein is V-type proton ATPase subunit E1 (VHA-E1).